We begin with the raw amino-acid sequence, 135 residues long: Small ribosomal subunit protein uS11 (135 aa).

The protein belongs to the universal ribosomal protein uS11 family. As to quaternary structure, part of the 30S ribosomal subunit. Interacts with proteins S7 and S18. Binds to IF-3.

Its function is as follows. Located on the platform of the 30S subunit, it bridges several disparate RNA helices of the 16S rRNA. Forms part of the Shine-Dalgarno cleft in the 70S ribosome. The chain is Small ribosomal subunit protein uS11 from Corynebacterium urealyticum (strain ATCC 43042 / DSM 7109).